The following is a 348-amino-acid chain: Alcohol dehydrogenase 2 (348 aa).

Positions 44, 67, 98, 101, 104, 112, and 154 each coordinate Zn(2+). Residues 178–184 (GAAGGLG), Asp202, Lys207, 269–271 (VGL), and Arg341 contribute to the NAD(+) site.

It belongs to the zinc-containing alcohol dehydrogenase family. In terms of assembly, homotetramer. Zn(2+) serves as cofactor.

It is found in the cytoplasm. The enzyme catalyses a primary alcohol + NAD(+) = an aldehyde + NADH + H(+). It catalyses the reaction a secondary alcohol + NAD(+) = a ketone + NADH + H(+). This chain is Alcohol dehydrogenase 2 (ADH2), found in Candida albicans (strain SC5314 / ATCC MYA-2876) (Yeast).